We begin with the raw amino-acid sequence, 241 residues long: Tryptophan synthase alpha chain (241 aa).

Residues glutamate 31 and aspartate 42 each act as proton acceptor in the active site.

This sequence belongs to the TrpA family. Tetramer of two alpha and two beta chains.

The enzyme catalyses (1S,2R)-1-C-(indol-3-yl)glycerol 3-phosphate + L-serine = D-glyceraldehyde 3-phosphate + L-tryptophan + H2O. Its pathway is amino-acid biosynthesis; L-tryptophan biosynthesis; L-tryptophan from chorismate: step 5/5. Functionally, the alpha subunit is responsible for the aldol cleavage of indoleglycerol phosphate to indole and glyceraldehyde 3-phosphate. The sequence is that of Tryptophan synthase alpha chain from Staphylococcus saprophyticus subsp. saprophyticus (strain ATCC 15305 / DSM 20229 / NCIMB 8711 / NCTC 7292 / S-41).